Consider the following 456-residue polypeptide: tRNA modification GTPase MnmE (456 aa).

The (6S)-5-formyl-5,6,7,8-tetrahydrofolate site is built by Arg24, Glu81, and Lys120. The region spanning 216–379 (GMTVVIAGRP…LREHLKACMG (164 aa)) is the TrmE-type G domain. Asn226 contributes to the K(+) binding site. GTP contacts are provided by residues 226-231 (NAGKSS), 245-251 (TEIAGTT), 270-273 (DTAG), 335-338 (NKAD), and 359-361 (SAR). A Mg(2+)-binding site is contributed by Ser230. Residues Thr245, Ile247, and Thr250 each contribute to the K(+) site. Thr251 contacts Mg(2+). Residue Lys456 coordinates (6S)-5-formyl-5,6,7,8-tetrahydrofolate.

Belongs to the TRAFAC class TrmE-Era-EngA-EngB-Septin-like GTPase superfamily. TrmE GTPase family. In terms of assembly, homodimer. Heterotetramer of two MnmE and two MnmG subunits. K(+) is required as a cofactor.

It localises to the cytoplasm. Exhibits a very high intrinsic GTPase hydrolysis rate. Involved in the addition of a carboxymethylaminomethyl (cmnm) group at the wobble position (U34) of certain tRNAs, forming tRNA-cmnm(5)s(2)U34. This is tRNA modification GTPase MnmE from Pseudomonas savastanoi pv. phaseolicola (strain 1448A / Race 6) (Pseudomonas syringae pv. phaseolicola (strain 1448A / Race 6)).